The sequence spans 618 residues: Pyocin-S1 (618 aa).

Belongs to the colicin/pyosin nuclease family. In terms of assembly, purified pyocin S1 makes up a complex of the two (large and small) proteins. The large protein, but not the pyocin complex, shows in vitro DNase activity.

Functionally, causes breakdown of chromosomal DNA as well as complete inhibition of lipid synthesis in sensitive cells. In Pseudomonas aeruginosa, this protein is Pyocin-S1 (pys1).